A 110-amino-acid polypeptide reads, in one-letter code: MNRNNVIDSLFNIIEDRKDKPIEGSYTGYLFEKGLDKILKKVGEESSEVIIAAKNEDEEELIKEICDLTYHIMVLMVEKQIKLDDIEKELEKRRERICNKKNERKTIEKL.

The protein belongs to the PRA-PH family.

It is found in the cytoplasm. The catalysed reaction is 1-(5-phospho-beta-D-ribosyl)-ATP + H2O = 1-(5-phospho-beta-D-ribosyl)-5'-AMP + diphosphate + H(+). Its pathway is amino-acid biosynthesis; L-histidine biosynthesis; L-histidine from 5-phospho-alpha-D-ribose 1-diphosphate: step 2/9. In Clostridium botulinum (strain ATCC 19397 / Type A), this protein is Phosphoribosyl-ATP pyrophosphatase.